A 339-amino-acid chain; its full sequence is Centromere protein N (339 aa).

A phosphoserine mark is found at S226 and S235.

This sequence belongs to the CENP-N/CHL4 family. In terms of assembly, component of the CENPA-NAC complex, at least composed of CENPA, CENPC, CENPH, CENPM, CENPN, CENPT and CENPU. The CENPA-NAC complex interacts with the CENPA-CAD complex, composed of CENPI, CENPK, CENPL, CENPO, CENPP, CENPQ, CENPR and CENPS. Interacts directly with CENPA. Identified in a centromere complex containing histones H2A, H2B and H4, and at least CENPA, CENPB, CENPC, CENPT, CENPN, HJURP, SUPT16H, SSRP1 and RSF1.

The protein resides in the nucleus. The protein localises to the chromosome. It localises to the centromere. It is found in the kinetochore. Component of the CENPA-NAC (nucleosome-associated) complex, a complex that plays a central role in assembly of kinetochore proteins, mitotic progression and chromosome segregation. The CENPA-NAC complex recruits the CENPA-CAD (nucleosome distal) complex and may be involved in incorporation of newly synthesized CENPA into centromeres. CENPN is the first protein to bind specifically to CENPA nucleosomes and the direct binding of CENPA nucleosomes by CENPN is required for centromere assembly. Required for chromosome congression and efficiently align the chromosomes on a metaphase plate. The chain is Centromere protein N (CENPN) from Bos taurus (Bovine).